A 406-amino-acid polypeptide reads, in one-letter code: Glycosyltransferase GlyE (406 aa).

The interval Asn3–Lys265 is GT8 domain. UDP contacts are provided by residues Ala11–Tyr16 and Asp106–Ser107. Residues Asp106, Asp108, and His227 each coordinate Mn(2+). Residue His227–Lys233 participates in UDP binding.

It in the N-terminal section; belongs to the glycosyltransferase 8 family. The cofactor is Mn(2+).

It functions in the pathway protein modification; protein glycosylation. Functionally, involved in the polymorphic O-glycosylation of the serine-rich repeat protein PsrP. Catalyzes the third step in glycosylation of PsrP in this bacteria. Transfers galactose from UDP-galactose to the terminal glucose moiety of already-glycosylated PsrP (using the short substrate PsrP-GlcNAc-Glc). Has a very marked preference for PsrP substrate that has already been modified by GlcNAc and glucose. Has hydrolytic activity against UDP-galactose but none against UDP-glucose. Its function is as follows. Also catalyzes the fourth step in glycosylation of PsrP in this bacteria. Can transfer the sugar from UDP-galactose to the terminal sugar moiety of PsrP-GlcNAc-Glc-Glc and of PsrP-GlcNAc-Glc-Gal. This is Glycosyltransferase GlyE from Streptococcus pneumoniae serotype 4 (strain ATCC BAA-334 / TIGR4).